The sequence spans 286 residues: Beta-lactamase SHV-46 (286 aa).

The signal sequence occupies residues Met1–Ala21. Ser66 serves as the catalytic Acyl-ester intermediate. The cysteines at positions 73 and 119 are disulfide-linked. Glu164 functions as the Proton acceptor in the catalytic mechanism. Substrate is bound at residue Lys230 to Gly232.

The protein belongs to the class-A beta-lactamase family.

The catalysed reaction is a beta-lactam + H2O = a substituted beta-amino acid. The polypeptide is Beta-lactamase SHV-46 (bla) (Klebsiella oxytoca).